A 462-amino-acid chain; its full sequence is MESERLESHLLNKQEEEASSFTSGLLLSTSVVVAGSFCYGCAMSYSSPAQSKIMEELGLSVADYSFFTSVMTLGGMITAVFSGKISALVGRRQTMWISDVCCIFGWLAVAFAHDIIMLNTGRLFLGFGVGLISYVVPVYIAEITPKTFRGGFSYSNQLLQCLGISLMFFTGNFFHWRTLALLSAIPSAFQVICLFFIPESPRWLAMYGQDQELEVSLKKLRGENSDILKEAAEIRETVEISRKESQSGIRDLFHIGNAHSLIIGLGLMLLQQFCGSAAISAYAARIFDKAGFPSDIGTTILAVILIPQSIVVMLTVDRWGRRPLLMISSIGMCICSFFIGLSYYLQKNGEFQKLCSVMLIVGLVGYVSSFGIGLGGLPWVIMSEIFPVNVKITAGSLVTMSNWFFNWIIIYSFNFMIQWSASGTYFIFSGVSLVTIVFIWTLVPETKGRTLEEIQTSLVRLS.

12 helical membrane passes run 23 to 43 (SGLLLSTSVVVAGSFCYGCAM), 70 to 90 (VMTLGGMITAVFSGKISALVG), 96 to 116 (WISDVCCIFGWLAVAFAHDII), 123 to 143 (LFLGFGVGLISYVVPVYIAEI), 156 to 176 (NQLLQCLGISLMFFTGNFFHW), 178 to 198 (TLALLSAIPSAFQVICLFFIP), 261 to 281 (LIIGLGLMLLQQFCGSAAISA), 296 to 316 (IGTTILAVILIPQSIVVMLTV), 324 to 344 (LLMISSIGMCICSFFIGLSYY), 357 to 377 (VMLIVGLVGYVSSFGIGLGGL), 397 to 417 (LVTMSNWFFNWIIIYSFNFMI), and 423 to 443 (GTYFIFSGVSLVTIVFIWTLV).

It belongs to the major facilitator superfamily. Sugar transporter (TC 2.A.1.1) family.

The protein localises to the membrane. Sugar transporter. This Arabidopsis thaliana (Mouse-ear cress) protein is Sugar transporter ERD6-like 2 (SUGTL3).